We begin with the raw amino-acid sequence, 706 residues long: Paxillin-like protein 1 (706 aa).

4 disordered regions span residues 24–192, 222–258, 279–341, and 514–537; these read ERAG…EQDL, VLDQ…LNFE, AKQE…TKVE, and IDNS…SSDA. The span at 35 to 64 shows a compositional bias: polar residues; sequence PFSSQRNASTGSLQASVKSPPITRQRNVSA. Ser43 and Ser63 each carry phosphoserine. 2 stretches are compositionally biased toward low complexity: residues 73-86 and 117-129; these read KSAY…AYSS and SSRP…SISR. Composition is skewed to basic and acidic residues over residues 130–150 and 222–236; these read PSER…DRQA and VLDQ…KEES. A compositionally biased stretch (acidic residues) spans 237–252; the sequence is SIEYESEGQQEDENDI. The span at 279–290 shows a compositional bias: basic and acidic residues; that stretch reads AKQEEKNTEPKI. The segment covering 296–308 has biased composition (polar residues); that stretch reads TRESNTPSLTMNA. 2 consecutive LIM zinc-binding domains span residues 556-612 and 621-672; these read CRAC…CQKH and CKVC…CGNH.

The chain is Paxillin-like protein 1 (PXL1) from Saccharomyces cerevisiae (strain ATCC 204508 / S288c) (Baker's yeast).